Consider the following 413-residue polypeptide: Alpha-1-antitrypsin-like protein CM55-SI (413 aa).

The first 24 residues, 1–24, serve as a signal peptide directing secretion; sequence MPSSISWGLLLLAALSCLGPGSLA. A Pyrrolidone carboxylic acid modification is found at Q25. N-linked (GlcNAc...) asparagine glycans are attached at residues N65, N102, N165, and N266. Positions 368 to 387 are RCL; the sequence is GGTVLGNIRSILRYEVIFDR.

This sequence belongs to the serpin family. As to expression, expressed in liver.

The sequence is that of Alpha-1-antitrypsin-like protein CM55-SI from Tamias sibiricus (Siberian chipmunk).